Reading from the N-terminus, the 191-residue chain is Peptidyl-tRNA hydrolase (191 aa).

TRNA is bound at residue tyrosine 14. Histidine 19 functions as the Proton acceptor in the catalytic mechanism. Residues tyrosine 64, asparagine 66, and asparagine 112 each contribute to the tRNA site.

This sequence belongs to the PTH family. Monomer.

It is found in the cytoplasm. It catalyses the reaction an N-acyl-L-alpha-aminoacyl-tRNA + H2O = an N-acyl-L-amino acid + a tRNA + H(+). In terms of biological role, hydrolyzes ribosome-free peptidyl-tRNAs (with 1 or more amino acids incorporated), which drop off the ribosome during protein synthesis, or as a result of ribosome stalling. Its function is as follows. Catalyzes the release of premature peptidyl moieties from peptidyl-tRNA molecules trapped in stalled 50S ribosomal subunits, and thus maintains levels of free tRNAs and 50S ribosomes. The sequence is that of Peptidyl-tRNA hydrolase from Syntrophotalea carbinolica (strain DSM 2380 / NBRC 103641 / GraBd1) (Pelobacter carbinolicus).